A 367-amino-acid chain; its full sequence is Nodulation protein NolF (367 aa).

Belongs to the membrane fusion protein (MFP) (TC 8.A.1) family.

Involved in the production of Medicago-specific nodulation signal molecule. The polypeptide is Nodulation protein NolF (nolF) (Rhizobium meliloti (strain 1021) (Ensifer meliloti)).